We begin with the raw amino-acid sequence, 102 residues long: Small ribosomal subunit protein uS10 (102 aa).

It belongs to the universal ribosomal protein uS10 family. In terms of assembly, part of the 30S ribosomal subunit.

Involved in the binding of tRNA to the ribosomes. The protein is Small ribosomal subunit protein uS10 of Caulobacter sp. (strain K31).